The primary structure comprises 83 residues: NAD(P)H-quinone oxidoreductase subunit L (83 aa).

2 helical membrane-spanning segments follow: residues 17–37 and 53–73; these read VLLAYGALGGAYLLVVPLALL and TAIYGMVFLFFPGLILFAPFI.

This sequence belongs to the complex I NdhL subunit family. In terms of assembly, NDH-1 can be composed of about 15 different subunits; different subcomplexes with different compositions have been identified which probably have different functions.

Its subcellular location is the cellular thylakoid membrane. The catalysed reaction is a plastoquinone + NADH + (n+1) H(+)(in) = a plastoquinol + NAD(+) + n H(+)(out). It catalyses the reaction a plastoquinone + NADPH + (n+1) H(+)(in) = a plastoquinol + NADP(+) + n H(+)(out). In terms of biological role, NDH-1 shuttles electrons from an unknown electron donor, via FMN and iron-sulfur (Fe-S) centers, to quinones in the respiratory and/or the photosynthetic chain. The immediate electron acceptor for the enzyme in this species is believed to be plastoquinone. Couples the redox reaction to proton translocation, and thus conserves the redox energy in a proton gradient. Cyanobacterial NDH-1 also plays a role in inorganic carbon-concentration. The protein is NAD(P)H-quinone oxidoreductase subunit L of Synechococcus sp. (strain RCC307).